The sequence spans 549 residues: TBC1 domain family member 3G (549 aa).

One can recognise a Rab-GAP TBC domain in the interval Gly101–Gly293. Residues Cys318 and Cys325 are each lipidated (S-palmitoyl cysteine). Disordered regions lie at residues Leu350–Pro443 and Ala507–Gln526. The segment covering Pro398–Pro417 has biased composition (low complexity).

Ubiquitinated by a CUL7-based E3 ligase, which leads to proteasomal degradation. In terms of processing, palmitoylation is required for membrane localization and protects TBC1D3 from ubiquitination.

Its subcellular location is the cell membrane. In terms of biological role, acts as a GTPase activating protein for RAB5. Does not act on RAB4 or RAB11. The sequence is that of TBC1 domain family member 3G (TBC1D3G) from Homo sapiens (Human).